The following is a 110-amino-acid chain: UPF0132 membrane protein MJ1443 (110 aa).

Transmembrane regions (helical) follow at residues 15–35 (IEGA…YILE), 49–69 (IILF…PYGW), and 70–90 (MLSG…MYKA).

The protein belongs to the UPF0132 family.

The protein resides in the cell membrane. The chain is UPF0132 membrane protein MJ1443 from Methanocaldococcus jannaschii (strain ATCC 43067 / DSM 2661 / JAL-1 / JCM 10045 / NBRC 100440) (Methanococcus jannaschii).